We begin with the raw amino-acid sequence, 529 residues long: Glucose-6-phosphate isomerase (529 aa).

Glu-322 functions as the Proton donor in the catalytic mechanism. Catalysis depends on residues His-351 and Lys-455.

Belongs to the GPI family.

It localises to the cytoplasm. It carries out the reaction alpha-D-glucose 6-phosphate = beta-D-fructose 6-phosphate. Its pathway is carbohydrate biosynthesis; gluconeogenesis. It functions in the pathway carbohydrate degradation; glycolysis; D-glyceraldehyde 3-phosphate and glycerone phosphate from D-glucose: step 2/4. Functionally, catalyzes the reversible isomerization of glucose-6-phosphate to fructose-6-phosphate. The sequence is that of Glucose-6-phosphate isomerase from Cyanothece sp. (strain PCC 7425 / ATCC 29141).